A 406-amino-acid polypeptide reads, in one-letter code: Cysteine desulfurase (406 aa).

Lys226 carries the post-translational modification N6-(pyridoxal phosphate)lysine. Catalysis depends on Cys364, which acts as the Cysteine persulfide intermediate.

Belongs to the class-V pyridoxal-phosphate-dependent aminotransferase family. Csd subfamily. Homodimer. Interacts with SufE and the SufBCD complex composed of SufB, SufC and SufD. The interaction with SufE is required to mediate the direct transfer of the sulfur atom from the S-sulfanylcysteine. Pyridoxal 5'-phosphate serves as cofactor.

The protein localises to the cytoplasm. The catalysed reaction is (sulfur carrier)-H + L-cysteine = (sulfur carrier)-SH + L-alanine. It catalyses the reaction L-selenocysteine + AH2 = hydrogenselenide + L-alanine + A + H(+). It participates in cofactor biosynthesis; iron-sulfur cluster biosynthesis. Cysteine desulfurases mobilize the sulfur from L-cysteine to yield L-alanine, an essential step in sulfur metabolism for biosynthesis of a variety of sulfur-containing biomolecules. Component of the suf operon, which is activated and required under specific conditions such as oxidative stress and iron limitation. Acts as a potent selenocysteine lyase in vitro, that mobilizes selenium from L-selenocysteine. Selenocysteine lyase activity is however unsure in vivo. The polypeptide is Cysteine desulfurase (Escherichia coli O6:K15:H31 (strain 536 / UPEC)).